Consider the following 459-residue polypeptide: tRNA modification GTPase MnmE (459 aa).

Arg23, Glu88, and Arg127 together coordinate (6S)-5-formyl-5,6,7,8-tetrahydrofolate. The 159-residue stretch at 223–381 folds into the TrmE-type G domain; the sequence is GLNTVIIGKP…LKDTIENMFA (159 aa). Asn233 serves as a coordination point for K(+). GTP-binding positions include 233–238, 252–258, and 277–280; these read NVGKSS, TDIPGTT, and DTAG. Ser237 is a Mg(2+) binding site. K(+)-binding residues include Thr252, Ile254, and Thr257. Thr258 is a Mg(2+) binding site. Lys459 provides a ligand contact to (6S)-5-formyl-5,6,7,8-tetrahydrofolate.

The protein belongs to the TRAFAC class TrmE-Era-EngA-EngB-Septin-like GTPase superfamily. TrmE GTPase family. In terms of assembly, homodimer. Heterotetramer of two MnmE and two MnmG subunits. K(+) serves as cofactor.

The protein localises to the cytoplasm. Exhibits a very high intrinsic GTPase hydrolysis rate. Involved in the addition of a carboxymethylaminomethyl (cmnm) group at the wobble position (U34) of certain tRNAs, forming tRNA-cmnm(5)s(2)U34. This chain is tRNA modification GTPase MnmE, found in Clostridium acetobutylicum (strain ATCC 824 / DSM 792 / JCM 1419 / IAM 19013 / LMG 5710 / NBRC 13948 / NRRL B-527 / VKM B-1787 / 2291 / W).